Here is a 537-residue protein sequence, read N- to C-terminus: CTP synthase (537 aa).

The amidoligase domain stretch occupies residues 1–265 (MVHFIFVTGG…DNKVLKFFNI (265 aa)). Ser-13 contributes to the CTP binding site. Ser-13 contacts UTP. Residues 14–19 (SLGKGL) and Asp-71 contribute to the ATP site. The Mg(2+) site is built by Asp-71 and Glu-139. Residues 146–148 (DIE) and Lys-222 contribute to the CTP site. Residue Lys-222 coordinates UTP. Residues 290–536 (RIAIIAKYHK…IKAAIEYNKC (247 aa)) form the Glutamine amidotransferase type-1 domain. Gly-352 provides a ligand contact to L-glutamine. Cys-379 (nucleophile; for glutamine hydrolysis) is an active-site residue. L-glutamine contacts are provided by residues 380–383 (FGMQ), Glu-403, and Arg-464. Active-site residues include His-509 and Glu-511.

Belongs to the CTP synthase family. As to quaternary structure, homotetramer.

The enzyme catalyses UTP + L-glutamine + ATP + H2O = CTP + L-glutamate + ADP + phosphate + 2 H(+). It carries out the reaction L-glutamine + H2O = L-glutamate + NH4(+). It catalyses the reaction UTP + NH4(+) + ATP = CTP + ADP + phosphate + 2 H(+). It functions in the pathway pyrimidine metabolism; CTP biosynthesis via de novo pathway; CTP from UDP: step 2/2. Its activity is regulated as follows. Allosterically activated by GTP, when glutamine is the substrate; GTP has no effect on the reaction when ammonia is the substrate. The allosteric effector GTP functions by stabilizing the protein conformation that binds the tetrahedral intermediate(s) formed during glutamine hydrolysis. Inhibited by the product CTP, via allosteric rather than competitive inhibition. In terms of biological role, catalyzes the ATP-dependent amination of UTP to CTP with either L-glutamine or ammonia as the source of nitrogen. Regulates intracellular CTP levels through interactions with the four ribonucleotide triphosphates. The protein is CTP synthase of Rickettsia rickettsii (strain Iowa).